The following is a 245-amino-acid chain: Uridylate kinase (245 aa).

Residue 15-18 (KLSG) participates in ATP binding. An involved in allosteric activation by GTP region spans residues 23–28 (GDEGFG). Glycine 57 provides a ligand contact to UMP. ATP-binding residues include glycine 58 and arginine 62. Residues aspartate 77 and 138-145 (TGNPFCTT) each bind UMP. Threonine 165, tyrosine 171, and aspartate 174 together coordinate ATP.

It belongs to the UMP kinase family. As to quaternary structure, homohexamer.

Its subcellular location is the cytoplasm. The catalysed reaction is UMP + ATP = UDP + ADP. The protein operates within pyrimidine metabolism; CTP biosynthesis via de novo pathway; UDP from UMP (UMPK route): step 1/1. Allosterically activated by GTP. Inhibited by UTP. Its function is as follows. Catalyzes the reversible phosphorylation of UMP to UDP. The chain is Uridylate kinase from Shewanella baltica (strain OS155 / ATCC BAA-1091).